Here is a 347-residue protein sequence, read N- to C-terminus: Endo-1,4-beta-xylanase 3 (347 aa).

A signal peptide spans 1–16; sequence MKANVILCLLAPLVAA. Positions 17-45 are excised as a propeptide; it reads LPTETIHLDPELAALRANLTERTADLWDR. At Q46 the chain carries Pyrrolidone carboxylic acid. A GH10 domain is found at 46–345; that stretch reads QASQSIDQLI…KPAYNSIVGI (300 aa). E176 acts as the Proton donor in catalysis. Residue E282 is the Nucleophile of the active site. C300 and C306 are oxidised to a cystine.

Belongs to the glycosyl hydrolase 10 (cellulase F) family. In terms of assembly, monomer. Post-translationally, not glycosylated.

The protein resides in the secreted. It carries out the reaction Endohydrolysis of (1-&gt;4)-beta-D-xylosidic linkages in xylans.. It participates in glycan degradation; xylan degradation. Its function is as follows. Glycoside hydrolase involved in the hydrolysis of xylan, a major plant cell wall hemicellulose made up of 1,4-beta-linked D-xylopyranose residues. Catalyzes the endohydrolysis of the main-chain 1,4-beta-glycosidic bonds connecting the xylose subunits yielding various xylooligosaccharides and xylose. Produces xylobiose and xylotriose as the main degradation products. This is Endo-1,4-beta-xylanase 3 (xyn3) from Hypocrea jecorina (strain QM6a) (Trichoderma reesei).